The sequence spans 98 residues: Guanine nucleotide-binding protein subunit gamma 1 (98 aa).

In terms of domain architecture, G protein gamma spans 19 to 98; the sequence is GKHRILAELA…GGEGCRCLIL (80 aa). Positions 20 to 50 form a coiled coil; it reads KHRILAELARVEQEVAFLEKELKEVENTDIV. The tract at residues 88–94 is regulates lipidation and cell membrane subcellular localization; sequence NGGEGCR. Cysteine 93 is lipidated: S-palmitoyl cysteine. Cysteine 95 is modified (cysteine methyl ester). The S-farnesyl cysteine moiety is linked to residue cysteine 95. Positions 96–98 are cleaved as a propeptide — removed in mature form; that stretch reads LIL.

In terms of assembly, g proteins are composed of 3 units, alpha, beta and gamma. Interacts with the beta subunit GB1. The dimer GB1-GG1 interacts with NDL1, NDL2 and NDL3. Binds to NUDT7. In terms of tissue distribution, mostly expressed in seedlings (especially at the hypocotyl/root junction), young cauline leaves, open flowers, and floral stems, and, to a lower extent, in roots (restricted to the stele), rosette leaves (restricted to veins), siliques, and unopened floral buds. Also present in hydathods.

The protein resides in the cell membrane. It is found in the golgi apparatus membrane. The protein localises to the golgi apparatus. Its subcellular location is the trans-Golgi network membrane. It localises to the cytoplasm. Its function is as follows. Guanine nucleotide-binding proteins (G proteins) are involved as a modulator or transducer in various transmembrane signaling systems. The beta and gamma chains are required for the GTPase activity, for replacement of GDP by GTP, and for G protein-effector interaction. Involved in the abscisic acid (ABA) and ethylene signaling pathways. Regulates acropetal transport of auxin (IAA) in roots and hypocotyls, and thus modulates root architecture (e.g. lateral root formation). The heterotrimeric G-protein controls defense responses to necrotrophic and vascular fungi probably by modulating cell wall-related genes expression; involved in resistance to fungal pathogens such as Alternaria brassicicola, Plectosphaerella cucumerina and Fusarium oxysporum. This chain is Guanine nucleotide-binding protein subunit gamma 1 (GG1), found in Arabidopsis thaliana (Mouse-ear cress).